A 1438-amino-acid chain; its full sequence is DNA-directed RNA polymerase subunit beta' (1438 aa).

Cys-72, Cys-74, Cys-87, and Cys-90 together coordinate Zn(2+). Asp-483, Asp-485, and Asp-487 together coordinate Mg(2+). Zn(2+) contacts are provided by Cys-831, Cys-905, Cys-912, and Cys-915.

The protein belongs to the RNA polymerase beta' chain family. The RNAP catalytic core consists of 2 alpha, 1 beta, 1 beta' and 1 omega subunit. When a sigma factor is associated with the core the holoenzyme is formed, which can initiate transcription. It depends on Mg(2+) as a cofactor. Requires Zn(2+) as cofactor.

The enzyme catalyses RNA(n) + a ribonucleoside 5'-triphosphate = RNA(n+1) + diphosphate. Functionally, DNA-dependent RNA polymerase catalyzes the transcription of DNA into RNA using the four ribonucleoside triphosphates as substrates. The chain is DNA-directed RNA polymerase subunit beta' from Flavobacterium psychrophilum (strain ATCC 49511 / DSM 21280 / CIP 103535 / JIP02/86).